The primary structure comprises 663 residues: Protein KINESIN LIGHT CHAIN-RELATED 2 (663 aa).

The segment covering 1 to 14 (MDVGESNERVKDDS) has biased composition (basic and acidic residues). Disordered regions lie at residues 1-24 (MDVGESNERVKDDSALQASPRSPL) and 86-146 (GESK…KVSV). Phosphoserine is present on Ser-19. A compositionally biased stretch (basic and acidic residues) spans 86 to 100 (GESKKEIILEKKEES). A compositionally biased stretch (polar residues) spans 102–111 (GEGSLSQKKP). TPR repeat units follow at residues 147 to 181 (DEESPELGVVLLKQARELVSSGENLNKALDLALRA), 200 to 233 (VMSLHILAAIYAGLGRYNDAVPVLERSIEIPMIE), 243 to 276 (FAGCMQLGDMYGLMGQVENSIMLYTAGLEIQRQV), 285 to 318 (GETCRYLAEAHVQAMQFEEASRLCQMALDIHKEN), 329 to 363 (AADRKLMGLICDAKGDYEVALEHYVLASMAMSSQN), 369 to 402 (AAVDCSIGDAYMSLARFDEAIFAYQKALAVFKQG), 411 to 444 (ALVYVRLADLYNKIGKTRDSKSYCENALKIYLKP), 454 to 487 (ATGFIEISAIYQSMNELDQALKLLRRALKIYANA), 495 to 528 (AGIEAQMGVVTYMMGNYSESYDIFKSAISKFRNS), 537 to 570 (GIALNQMGLACVQRYAINEAADLFEEAKTILEKE), and 579 to 612 (LAVYSNLAGTYDAMGRLDDAIEILEYVVGTREEK).

This sequence belongs to the kinesin light chain family.

This chain is Protein KINESIN LIGHT CHAIN-RELATED 2, found in Arabidopsis thaliana (Mouse-ear cress).